The chain runs to 290 residues: uncharacterized protein (290 aa).

The tract at residues 67-210 (LPAAPEAPGD…QPSPKNPTKS (144 aa)) is disordered. Basic and acidic residues predominate over residues 121 to 130 (RPQETQEGHR). A compositionally biased stretch (low complexity) spans 181 to 190 (AAQAAAAATA). Residues 191–200 (NPGSQTQTPL) show a composition bias toward polar residues.

This is an uncharacterized protein from Homo sapiens (Human).